Reading from the N-terminus, the 659-residue chain is uncharacterized protein (659 aa).

16 consecutive transmembrane segments (helical) span residues 24–44, 71–91, 115–135, 157–177, 183–203, 214–234, 242–262, 279–299, 311–331, 365–385, 393–413, 433–453, 490–510, 517–537, 550–570, and 596–616; these read TTLM…YGLF, FGAS…VMMV, IGWL…DSGV, RAWI…RVII, FVLL…GNAG, AVIV…TAAL, AVLI…AELV, LGLV…WALV, LTAL…VQTA, FDSL…AGFV, TWPV…VFTS, MTLN…TLAL, FILF…DTLV, EFMA…IIGI, IGLL…LMTM, and IGGA…IVAL.

It to M.tuberculosis Rv0102.

It is found in the cell membrane. This is an uncharacterized protein from Mycobacterium leprae (strain TN).